The sequence spans 320 residues: Phospho-N-acetylmuramoyl-pentapeptide-transferase (320 aa).

9 consecutive transmembrane segments (helical) span residues 5–25, 51–71, 76–96, 124–144, 145–165, 176–196, 198–218, 233–255, and 298–318; these read LWALARAFIITVVFMPFLIKF, MGGLLFVLAAAISAFIGGAAY, GVVAMIIPVFALVAYAIIGGI, VVIMLIMWLLGVPFTLYIPMI, GTINLGLFYFVFLWFWLVGWS, GLLAGNSVVVYAAYTVIAMHM, NHIIVLFNFSIIGGLLGFLIF, LALGAGLAIESILLGVPFSLIWF, and WQIDLLFWIVSSILAVAGIFY.

It belongs to the glycosyltransferase 4 family. MraY subfamily. It depends on Mg(2+) as a cofactor.

The protein resides in the cell membrane. It carries out the reaction UDP-N-acetyl-alpha-D-muramoyl-L-alanyl-gamma-D-glutamyl-L-lysyl-D-alanyl-D-alanine + di-trans,octa-cis-undecaprenyl phosphate = Mur2Ac(oyl-L-Ala-gamma-D-Glu-L-Lys-D-Ala-D-Ala)-di-trans,octa-cis-undecaprenyl diphosphate + UMP. The protein operates within cell wall biogenesis; peptidoglycan biosynthesis. Its function is as follows. Catalyzes the initial step of the lipid cycle reactions in the biosynthesis of the cell wall peptidoglycan: transfers peptidoglycan precursor phospho-MurNAc-pentapeptide from UDP-MurNAc-pentapeptide onto the lipid carrier undecaprenyl phosphate, yielding undecaprenyl-pyrophosphoryl-MurNAc-pentapeptide, known as lipid I. The chain is Phospho-N-acetylmuramoyl-pentapeptide-transferase from Leuconostoc citreum (strain KM20).